The sequence spans 437 residues: Tol-Pal system protein TolB (437 aa).

The N-terminal stretch at 1 to 23 (MQKRHPIIYLLITLLIFVPVSYG) is a signal peptide.

Belongs to the TolB family. As to quaternary structure, the Tol-Pal system is composed of five core proteins: the inner membrane proteins TolA, TolQ and TolR, the periplasmic protein TolB and the outer membrane protein Pal. They form a network linking the inner and outer membranes and the peptidoglycan layer.

It is found in the periplasm. In terms of biological role, part of the Tol-Pal system, which plays a role in outer membrane invagination during cell division and is important for maintaining outer membrane integrity. This chain is Tol-Pal system protein TolB, found in Coxiella burnetii (strain RSA 493 / Nine Mile phase I).